We begin with the raw amino-acid sequence, 124 residues long: Small ribosomal subunit protein uS12 (124 aa).

The residue at position 89 (aspartate 89) is a 3-methylthioaspartic acid. Residues 104–124 (ATGVKDRKQGRSKYGAKRPKE) form a disordered region. The span at 113–124 (GRSKYGAKRPKE) shows a compositional bias: basic residues.

The protein belongs to the universal ribosomal protein uS12 family. Part of the 30S ribosomal subunit. Contacts proteins S8 and S17. May interact with IF1 in the 30S initiation complex.

With S4 and S5 plays an important role in translational accuracy. In terms of biological role, interacts with and stabilizes bases of the 16S rRNA that are involved in tRNA selection in the A site and with the mRNA backbone. Located at the interface of the 30S and 50S subunits, it traverses the body of the 30S subunit contacting proteins on the other side and probably holding the rRNA structure together. The combined cluster of proteins S8, S12 and S17 appears to hold together the shoulder and platform of the 30S subunit. In Picosynechococcus sp. (strain ATCC 27264 / PCC 7002 / PR-6) (Agmenellum quadruplicatum), this protein is Small ribosomal subunit protein uS12.